A 443-amino-acid polypeptide reads, in one-letter code: Histidinol dehydrogenase (443 aa).

NAD(+) is bound by residues Tyr-133, Gln-191, and Asn-214. Positions 240, 262, and 265 each coordinate substrate. 2 residues coordinate Zn(2+): Gln-262 and His-265. Active-site proton acceptor residues include Glu-329 and His-330. 4 residues coordinate substrate: His-330, Asp-363, Glu-417, and His-422. Residue Asp-363 coordinates Zn(2+). His-422 is a Zn(2+) binding site.

It belongs to the histidinol dehydrogenase family. Homodimer. Requires Zn(2+) as cofactor.

It catalyses the reaction L-histidinol + 2 NAD(+) + H2O = L-histidine + 2 NADH + 3 H(+). It participates in amino-acid biosynthesis; L-histidine biosynthesis; L-histidine from 5-phospho-alpha-D-ribose 1-diphosphate: step 9/9. Its function is as follows. Catalyzes the sequential NAD-dependent oxidations of L-histidinol to L-histidinaldehyde and then to L-histidine. This is Histidinol dehydrogenase from Blochmanniella pennsylvanica (strain BPEN).